The chain runs to 209 residues: V-type ATP synthase subunit D (209 aa).

This sequence belongs to the V-ATPase D subunit family.

Its function is as follows. Produces ATP from ADP in the presence of a proton gradient across the membrane. The sequence is that of V-type ATP synthase subunit D from Thermoanaerobacter pseudethanolicus (strain ATCC 33223 / 39E) (Clostridium thermohydrosulfuricum).